The sequence spans 77 residues: EMBRYO SURROUNDING FACTOR 1-like protein 6 (77 aa).

Positions 1–25 (MSPSHFAILFIIVISLVPLHGYANG) are cleaved as a signal peptide. Cystine bridges form between Cys38–Cys53, Cys43–Cys72, Cys51–Cys68, and Cys54–Cys61.

Belongs to the MEG family.

This chain is EMBRYO SURROUNDING FACTOR 1-like protein 6 (ESFL6), found in Arabidopsis thaliana (Mouse-ear cress).